A 283-amino-acid polypeptide reads, in one-letter code: Phosphatidylserine decarboxylase proenzyme (283 aa).

Catalysis depends on charge relay system; for autoendoproteolytic cleavage activity residues aspartate 88, histidine 145, and serine 248. Serine 248 (schiff-base intermediate with substrate; via pyruvic acid; for decarboxylase activity) is an active-site residue. At serine 248 the chain carries Pyruvic acid (Ser); by autocatalysis.

It belongs to the phosphatidylserine decarboxylase family. PSD-B subfamily. Prokaryotic type I sub-subfamily. Heterodimer of a large membrane-associated beta subunit and a small pyruvoyl-containing alpha subunit. Requires pyruvate as cofactor. Post-translationally, is synthesized initially as an inactive proenzyme. Formation of the active enzyme involves a self-maturation process in which the active site pyruvoyl group is generated from an internal serine residue via an autocatalytic post-translational modification. Two non-identical subunits are generated from the proenzyme in this reaction, and the pyruvate is formed at the N-terminus of the alpha chain, which is derived from the carboxyl end of the proenzyme. The autoendoproteolytic cleavage occurs by a canonical serine protease mechanism, in which the side chain hydroxyl group of the serine supplies its oxygen atom to form the C-terminus of the beta chain, while the remainder of the serine residue undergoes an oxidative deamination to produce ammonia and the pyruvoyl prosthetic group on the alpha chain. During this reaction, the Ser that is part of the protease active site of the proenzyme becomes the pyruvoyl prosthetic group, which constitutes an essential element of the active site of the mature decarboxylase.

It localises to the cell membrane. It catalyses the reaction a 1,2-diacyl-sn-glycero-3-phospho-L-serine + H(+) = a 1,2-diacyl-sn-glycero-3-phosphoethanolamine + CO2. Its pathway is phospholipid metabolism; phosphatidylethanolamine biosynthesis; phosphatidylethanolamine from CDP-diacylglycerol: step 2/2. Functionally, catalyzes the formation of phosphatidylethanolamine (PtdEtn) from phosphatidylserine (PtdSer). The chain is Phosphatidylserine decarboxylase proenzyme from Methylibium petroleiphilum (strain ATCC BAA-1232 / LMG 22953 / PM1).